The chain runs to 593 residues: Aspartate--tRNA ligase (593 aa).

Position 181 (E181) interacts with L-aspartate. The aspartate stretch occupies residues 205–208 (QLYK). L-aspartate is bound at residue R227. ATP-binding positions include 227 to 229 (RDE) and Q236. H455 provides a ligand contact to L-aspartate. ATP is bound at residue E489. R496 is a binding site for L-aspartate. 541–544 (GLDR) lines the ATP pocket.

This sequence belongs to the class-II aminoacyl-tRNA synthetase family. Type 1 subfamily. As to quaternary structure, homodimer.

Its subcellular location is the cytoplasm. It catalyses the reaction tRNA(Asp) + L-aspartate + ATP = L-aspartyl-tRNA(Asp) + AMP + diphosphate. Its function is as follows. Catalyzes the attachment of L-aspartate to tRNA(Asp) in a two-step reaction: L-aspartate is first activated by ATP to form Asp-AMP and then transferred to the acceptor end of tRNA(Asp). In Ruminiclostridium cellulolyticum (strain ATCC 35319 / DSM 5812 / JCM 6584 / H10) (Clostridium cellulolyticum), this protein is Aspartate--tRNA ligase.